Here is a 211-residue protein sequence, read N- to C-terminus: Recombination protein RecR (211 aa).

Residues Cys70–Cys85 form a C4-type zinc finger. The 98-residue stretch at Lys93–Gln190 folds into the Toprim domain.

This sequence belongs to the RecR family.

Functionally, may play a role in DNA repair. It seems to be involved in an RecBC-independent recombinational process of DNA repair. It may act with RecF and RecO. The polypeptide is Recombination protein RecR (Aquifex aeolicus (strain VF5)).